A 516-amino-acid polypeptide reads, in one-letter code: Glycerol-3-phosphate dehydrogenase 1 (516 aa).

28–56 (DVIVIGGGITGVGIALDAATRGLTVALVE) provides a ligand contact to FAD.

This sequence belongs to the FAD-dependent glycerol-3-phosphate dehydrogenase family. Requires FAD as cofactor.

The protein resides in the cytoplasm. The enzyme catalyses a quinone + sn-glycerol 3-phosphate = dihydroxyacetone phosphate + a quinol. The chain is Glycerol-3-phosphate dehydrogenase 1 (glpD1) from Mycobacterium bovis (strain ATCC BAA-935 / AF2122/97).